We begin with the raw amino-acid sequence, 87 residues long: Large ribosomal subunit protein bL27 (87 aa).

It belongs to the bacterial ribosomal protein bL27 family.

This is Large ribosomal subunit protein bL27 from Renibacterium salmoninarum (strain ATCC 33209 / DSM 20767 / JCM 11484 / NBRC 15589 / NCIMB 2235).